Consider the following 1474-residue polypeptide: Alpha-2-macroglobulin (1474 aa).

A signal peptide spans 1-23 (MGKNKLLHPSLVLLLLVLLPTDA). Cys48 and Cys86 form a disulfide bridge. N-linked (GlcNAc...) asparagine glycans are attached at residues Asn55, Asn70, and Asn247. 2 disulfides stabilise this stretch: Cys251–Cys299 and Cys269–Cys287. Asn396 and Asn410 each carry an N-linked (GlcNAc...) asparagine glycan. 8 cysteine pairs are disulfide-bonded: Cys470-Cys563, Cys595-Cys771, Cys642-Cys689, Cys821-Cys849, Cys847-Cys883, Cys921-Cys1321, Cys1079-Cys1127, and Cys1352-Cys1467. The tract at residues 690–728 (PQLQQYEMHGPEGLRVGFYESDVMGRGHARLVHAEEPPT) is bait region. Residues Gln693 and Gln694 each participate in an isoglutamyl lysine isopeptide (Gln-Lys) (interchain with K-? in other proteins) cross-link. 3 inhibitory regions span residues 704–709 (RVGFYE), 719–723 (RLVHA), and 730–735 (TVRKYF). The N-linked (GlcNAc...) asparagine glycan is linked to Asn869. Residues 972 to 975 (CGEQ) constitute a cross-link (isoglutamyl cysteine thioester (Cys-Gln)). Asn991 is a glycosylation site (N-linked (GlcNAc...) asparagine). Residue Asn1424 is glycosylated (N-linked (GlcNAc...) asparagine).

It belongs to the protease inhibitor I39 (alpha-2-macroglobulin) family. Homotetramer; disulfide-linked. In terms of tissue distribution, plasma.

It localises to the secreted. Is able to inhibit all four classes of proteinases by a unique 'trapping' mechanism. This protein has a peptide stretch, called the 'bait region' which contains specific cleavage sites for different proteinases. When a proteinase cleaves the bait region, a conformational change is induced in the protein which traps the proteinase. The entrapped enzyme remains active against low molecular weight substrates (activity against high molecular weight substrates is greatly reduced). Following cleavage in the bait region a thioester bond is hydrolyzed and mediates the covalent binding of the protein to the proteinase. This chain is Alpha-2-macroglobulin (A2M), found in Pongo abelii (Sumatran orangutan).